The chain runs to 299 residues: Acetylglutamate kinase (299 aa).

Residues 70–71 (GG), R92, and N186 contribute to the substrate site.

Belongs to the acetylglutamate kinase family. ArgB subfamily.

It localises to the cytoplasm. It carries out the reaction N-acetyl-L-glutamate + ATP = N-acetyl-L-glutamyl 5-phosphate + ADP. It functions in the pathway amino-acid biosynthesis; L-arginine biosynthesis; N(2)-acetyl-L-ornithine from L-glutamate: step 2/4. Functionally, catalyzes the ATP-dependent phosphorylation of N-acetyl-L-glutamate. The polypeptide is Acetylglutamate kinase (Thermoanaerobacter sp. (strain X514)).